The chain runs to 229 residues: MSKNSVIIVAAGKGKRMNSSISKQFLQIKNKPILYYTLSKFSTHESIDEIVLVTLEDKIEVCGDIIDKYNINKVSKIVPGGKERQDSVYNGLKAVSKDCEVVLIHDAARPFVTSDIIENGIRYTNQYGAAACGVIPKDTIKIKSEKGFAIDTPNREDLFIVQTPQCFNYNIILDCHEKLKKHNKKVTDDTMVLENYGKSVYLYEGNYSNIKITTPEDLILGEQILEKLT.

This sequence belongs to the IspD/TarI cytidylyltransferase family. IspD subfamily.

The enzyme catalyses 2-C-methyl-D-erythritol 4-phosphate + CTP + H(+) = 4-CDP-2-C-methyl-D-erythritol + diphosphate. The protein operates within isoprenoid biosynthesis; isopentenyl diphosphate biosynthesis via DXP pathway; isopentenyl diphosphate from 1-deoxy-D-xylulose 5-phosphate: step 2/6. Its function is as follows. Catalyzes the formation of 4-diphosphocytidyl-2-C-methyl-D-erythritol from CTP and 2-C-methyl-D-erythritol 4-phosphate (MEP). The protein is 2-C-methyl-D-erythritol 4-phosphate cytidylyltransferase of Clostridium botulinum (strain Okra / Type B1).